The chain runs to 485 residues: AP2-like ethylene-responsive transcription factor TOE2 (485 aa).

Positions 124-135 (GDFIGSGSGGGD) are enriched in gly residues. Residues 124–161 (GDFIGSGSGGGDASRVMQPPSQPVKKSRRGPRSKSSQY) form a disordered region. The segment at residues 160 to 216 (QYRGVTFYRRTGRWESHIWDCGKQVYLGGFDTAHAAARAYDRAAVKFRGLEADINFV) is a DNA-binding region (AP2/ERF).

The protein belongs to the AP2/ERF transcription factor family. AP2 subfamily.

The protein localises to the nucleus. In terms of biological role, probably acts as a transcriptional activator. Binds to the GCC-box pathogenesis-related promoter element. May be involved in the regulation of gene expression by stress factors and by components of stress signal transduction pathways. Regulates negatively the transition to flowering time and confers flowering time delay. This is AP2-like ethylene-responsive transcription factor TOE2 (TOE2) from Arabidopsis thaliana (Mouse-ear cress).